The following is a 130-amino-acid chain: MNIIEQLEREEIARLAKTIPDFEPGDTVIVNVRVKEGERTRVQAYEGVCIARNGGGLNESFTVRKISYGEGVERVFPVHSPMIDSIKVVRRGKVRRAKLYYLRDRRGKSARIVERNDRPAKAEKAPAAAE.

It belongs to the bacterial ribosomal protein bL19 family.

In terms of biological role, this protein is located at the 30S-50S ribosomal subunit interface and may play a role in the structure and function of the aminoacyl-tRNA binding site. The sequence is that of Large ribosomal subunit protein bL19 from Methylorubrum populi (strain ATCC BAA-705 / NCIMB 13946 / BJ001) (Methylobacterium populi).